Here is a 141-residue protein sequence, read N- to C-terminus: uncharacterized protein (141 aa).

4 helical membrane-spanning segments follow: residues 7–27 (VAIM…AASL), 47–67 (SAVG…MLGV), 75–95 (AVLC…ILMF), and 106–126 (VIFV…WFVA).

The protein localises to the cell membrane. This is an uncharacterized protein from Bacillus subtilis (strain 168).